The chain runs to 1648 residues: Kinesin-like protein KIF14 (1648 aa).

Positions 1–27 (MSLHSTHNRNNSGDILDIPSSQNSSSL) are disordered. Residues 1 to 356 (MSLHSTHNRN…AGKDPLKVEN (356 aa)) form a required for PRC1-binding region. A phosphoserine mark is found at Ser-12 and Ser-272. Residue Thr-277 is modified to Phosphothreonine. The residue at position 346 (Ser-346) is a Phosphoserine. Positions 356–737 (NSQVTVAVRV…AAQRNSRNID (382 aa)) are required for microtubule-binding with high affinity. The Kinesin motor domain maps to 358–701 (QVTVAVRVRP…LRYANQARLI (344 aa)). An ATP-binding site is contributed by 447–454 (GQTGSGKS). Residues 705–791 (AKVNEDMNAK…QETKELQKAG (87 aa)) adopt a coiled-coil conformation. The FHA domain occupies 825–891 (TTVGKYKPNS…LRHGDRVILG (67 aa)). A required for CIT-binding region spans residues 901-1648 (PVEVQKGKRP…ECTPSRIQWV (748 aa)). Thr-915 bears the Phosphothreonine mark. Residues 922 to 1079 (KDFEFAKNEL…QNRNNRDKTF (158 aa)) adopt a coiled-coil conformation. Phosphoserine occurs at positions 937 and 1292. Coiled-coil stretches lie at residues 1332–1348 (TNIARLEDELRQEVKKL) and 1468–1500 (ENIFAESKIKSFRRQVQEENFEYQDFKRMVNRA). The segment at 1600–1648 (NTKEEHQQSKSSGIDGSKNKGVPKRVYELHGSSPAVSSEECTPSRIQWV) is disordered. The segment covering 1633-1648 (PAVSSEECTPSRIQWV) has biased composition (polar residues).

Belongs to the TRAFAC class myosin-kinesin ATPase superfamily. Kinesin family. In terms of assembly, directly interacts with PRC1 within a complex also containing KIF4A, KIF20A and KIF23; targets to the central spindle. Directly interacts with CIT depending on the activation state of the kinase (stronger interaction with the kinase-dead form); targets to the midbody. Interacts with ARRB2; the interaction is detected in the nucleus upon OR1D2 stimulation. Interacts with AKT1; the interaction is detected in the plasma membrane upon INS stimulation and promotes AKT1 phosphorylation. Interacts with SVIL; at midbody during cytokinesis. Interacts with RADIL (via PDZ domain); recruits RADIL to the microtubule network restricting RADIL from interaction with activated RAP1A.

The protein resides in the nucleus. It localises to the cytoplasm. The protein localises to the cytoskeleton. It is found in the spindle. Its subcellular location is the midbody. Microtubule motor protein that binds to microtubules with high affinity through each tubulin heterodimer and has an ATPase activity. Plays a role in many processes like cell division, cytokinesis and also in cell proliferation and apoptosis. During cytokinesis, targets to central spindle and midbody through its interaction with PRC1 and CIT respectively. Regulates cell growth through regulation of cell cycle progression and cytokinesis. During cell cycle progression acts through SCF-dependent proteasomal ubiquitin-dependent protein catabolic process which controls CDKN1B degradation, resulting in positive regulation of cyclins, including CCNE1, CCND1 and CCNB1. During late neurogenesis, regulates the cerebellar, cerebral cortex and olfactory bulb development through regulation of apoptosis, cell proliferation and cell division. Also is required for chromosome congression and alignment during mitotic cell cycle process. Regulates cell spreading, focal adhesion dynamics, and cell migration through its interaction with RADIL resulting in regulation of RAP1A-mediated inside-out integrin activation by tethering RADIL on microtubules. The polypeptide is Kinesin-like protein KIF14 (Homo sapiens (Human)).